The chain runs to 330 residues: uncharacterized protein (330 aa).

The protein to H.influenzae HI_0461.

This is an uncharacterized protein from Escherichia coli (strain K12).